Consider the following 1289-residue polypeptide: uncharacterized protein (1289 aa).

Residues 615–733 (LDMYDVLKEL…DGMLSYSAQL (119 aa)) form the MHD1 domain. Residues 745–774 (DEPSYSLESSDTRSSLSLNNANVNHEKSRS) are disordered. Over residues 748–762 (SYSLESSDTRSSLSL) the composition is skewed to low complexity. The region spanning 834–966 (AQYHSSHNLE…DDGFPIDFSL (133 aa)) is the C2 domain. In terms of domain architecture, MHD2 spans 1044–1184 (YDAILPLFDY…KSVSELKDEV (141 aa)).

Its subcellular location is the cytoplasm. This is an uncharacterized protein from Saccharomyces cerevisiae (strain ATCC 204508 / S288c) (Baker's yeast).